Consider the following 393-residue polypeptide: DNA primase large subunit PriL (393 aa).

[4Fe-4S] cluster-binding residues include C230, C339, C350, and C356.

This sequence belongs to the eukaryotic-type primase large subunit family. As to quaternary structure, heterodimer of a small subunit (PriS) and a large subunit (PriL). [4Fe-4S] cluster serves as cofactor.

In terms of biological role, regulatory subunit of DNA primase, an RNA polymerase that catalyzes the synthesis of short RNA molecules used as primers for DNA polymerase during DNA replication. Stabilizes and modulates the activity of the small subunit, increasing the rate of DNA synthesis, and conferring RNA synthesis capability. The DNA polymerase activity may enable DNA primase to also catalyze primer extension after primer synthesis. May also play a role in DNA repair. Displays gap-filling and strand-displacement activities. The protein is DNA primase large subunit PriL of Pyrococcus abyssi (strain GE5 / Orsay).